Here is a 698-residue protein sequence, read N- to C-terminus: Elongation factor G (698 aa).

One can recognise a tr-type G domain in the interval 8–290 (ERYRNIGIAA…AVIEFLPAPN (283 aa)). GTP contacts are provided by residues 17–24 (AHIDAGKT), 88–92 (DTPGH), and 142–145 (NKMD).

Belongs to the TRAFAC class translation factor GTPase superfamily. Classic translation factor GTPase family. EF-G/EF-2 subfamily.

Its subcellular location is the cytoplasm. Functionally, catalyzes the GTP-dependent ribosomal translocation step during translation elongation. During this step, the ribosome changes from the pre-translocational (PRE) to the post-translocational (POST) state as the newly formed A-site-bound peptidyl-tRNA and P-site-bound deacylated tRNA move to the P and E sites, respectively. Catalyzes the coordinated movement of the two tRNA molecules, the mRNA and conformational changes in the ribosome. In Halorhodospira halophila (strain DSM 244 / SL1) (Ectothiorhodospira halophila (strain DSM 244 / SL1)), this protein is Elongation factor G.